We begin with the raw amino-acid sequence, 62 residues long: Photosystem II reaction center protein Z (62 aa).

Methionine 1 bears the N-formylmethionine mark. Over 1–4 (MTIL) the chain is Lumenal. The chain crosses the membrane as a helical span at residues 5 to 25 (FQLALAALVILSFVMVIGVPV). Residues 26–36 (AYASPQDWDRS) lie on the Cytoplasmic side of the membrane. A helical transmembrane segment spans residues 37–58 (KQLIFLGSGLWIALVLVVGVLN). At 59–62 (FFVV) the chain is on the lumenal side.

This sequence belongs to the PsbZ family. As to quaternary structure, PSII is composed of 1 copy each of membrane proteins PsbA, PsbB, PsbC, PsbD, PsbE, PsbF, PsbH, PsbI, PsbJ, PsbK, PsbL, PsbM, PsbT, PsbX, PsbY, PsbZ, Psb30/Ycf12, peripheral proteins PsbO, CyanoQ (PsbQ), PsbU, PsbV and a large number of cofactors. It forms dimeric complexes. Part of a photosystem II (PSII) assembly intermediate complex PSII-I; crystallized from a strain deleted of psbJ, it forms monomeric PSII before addition of the oxygen evolving complex. PSII-I includes 3 assembly factors not found in mature PSII (Psb27, Psb28 and Psb34). The cofactor is PSII binds multiple chlorophylls, carotenoids and specific lipids..

The protein localises to the cellular thylakoid membrane. May control the interaction of photosystem II (PSII) cores with the light-harvesting antenna, regulates electron flow through the 2 photosystem reaction centers. PSII is a light-driven water plastoquinone oxidoreductase, using light energy to abstract electrons from H(2)O, generating a proton gradient subsequently used for ATP formation. Its function is as follows. May also aid in binding of PsbK, Psb30/Ycf12 and the oxygen-evolving complex to PSII, at least in vitro. The polypeptide is Photosystem II reaction center protein Z (Thermosynechococcus vestitus (strain NIES-2133 / IAM M-273 / BP-1)).